A 218-amino-acid polypeptide reads, in one-letter code: N-(5'-phosphoribosyl)anthranilate isomerase (218 aa).

Belongs to the TrpF family.

It carries out the reaction N-(5-phospho-beta-D-ribosyl)anthranilate = 1-(2-carboxyphenylamino)-1-deoxy-D-ribulose 5-phosphate. It functions in the pathway amino-acid biosynthesis; L-tryptophan biosynthesis; L-tryptophan from chorismate: step 3/5. The sequence is that of N-(5'-phosphoribosyl)anthranilate isomerase from Rhodopseudomonas palustris (strain BisB18).